The sequence spans 223 residues: Translation initiation factor 6 (223 aa).

Belongs to the eIF-6 family.

Functionally, binds to the 50S ribosomal subunit and prevents its association with the 30S ribosomal subunit to form the 70S initiation complex. The chain is Translation initiation factor 6 from Thermofilum pendens (strain DSM 2475 / Hrk 5).